Here is a 465-residue protein sequence, read N- to C-terminus: Fusarisetin A cluster transcription factor fsa5 (465 aa).

A DNA-binding region (zn(2)-C6 fungal-type) is located at residues 13–47; the sequence is CDRCRSHKLKCTVAPENTRSGSSRCTRCIRAQVTC. The tract at residues 58–88 is disordered; that stretch reads STNVKKADLRSGTNGQETTSMQASTIVPGSP. Residues 68–84 show a composition bias toward polar residues; that stretch reads SGTNGQETTSMQASTIV.

It localises to the nucleus. Its function is as follows. Transcription activator that specifically regulates the expression of the gene cluster that mediates the biosynthesis of fusarisetin A. The sequence is that of Fusarisetin A cluster transcription factor fsa5 from Fusarium sp. (strain FN080326).